Here is a 416-residue protein sequence, read N- to C-terminus: LL-diaminopimelate aminotransferase (416 aa).

Residues tyrosine 25 and glycine 52 each coordinate substrate. Residues tyrosine 78, 115–116 (SK), tyrosine 140, asparagine 190, tyrosine 221, and 248–250 (SFS) each bind pyridoxal 5'-phosphate. 3 residues coordinate substrate: lysine 116, tyrosine 140, and asparagine 190. Lysine 251 bears the N6-(pyridoxal phosphate)lysine mark. Arginine 259 serves as a coordination point for pyridoxal 5'-phosphate.

The protein belongs to the class-I pyridoxal-phosphate-dependent aminotransferase family. Homodimer. Pyridoxal 5'-phosphate is required as a cofactor.

The protein localises to the cytoplasm. It catalyses the reaction (2S,6S)-2,6-diaminopimelate + 2-oxoglutarate = (S)-2,3,4,5-tetrahydrodipicolinate + L-glutamate + H2O + H(+). It functions in the pathway amino-acid biosynthesis; L-lysine biosynthesis via DAP pathway; LL-2,6-diaminopimelate from (S)-tetrahydrodipicolinate (aminotransferase route): step 1/1. In terms of biological role, involved in the synthesis of meso-diaminopimelate (m-DAP or DL-DAP), required for both lysine and peptidoglycan biosynthesis. Catalyzes the direct conversion of tetrahydrodipicolinate to LL-diaminopimelate. The sequence is that of LL-diaminopimelate aminotransferase (dapL) from Methanococcus maripaludis (strain DSM 14266 / JCM 13030 / NBRC 101832 / S2 / LL).